The chain runs to 129 residues: Allergen Bra j 1-E (129 aa).

Residues 28-47 (KQAMQSGSGPQPQGPQQRPP) form a disordered region. Residues 32–47 (QSGSGPQPQGPQQRPP) are compositionally biased toward low complexity.

It belongs to the 2S seed storage albumins family. In terms of assembly, the mature protein consists of a small and a large chain linked by two disulfide bonds.

This is a 2S seed storage protein. The protein is Allergen Bra j 1-E of Brassica juncea (Indian mustard).